An 82-amino-acid chain; its full sequence is Small ribosomal subunit protein bS18 (82 aa).

Positions 1–20 are disordered; it reads MVDINQIPTRRPFHRRRKTC.

It belongs to the bacterial ribosomal protein bS18 family. In terms of assembly, part of the 30S ribosomal subunit. Forms a tight heterodimer with protein bS6.

Binds as a heterodimer with protein bS6 to the central domain of the 16S rRNA, where it helps stabilize the platform of the 30S subunit. This Brucella anthropi (strain ATCC 49188 / DSM 6882 / CCUG 24695 / JCM 21032 / LMG 3331 / NBRC 15819 / NCTC 12168 / Alc 37) (Ochrobactrum anthropi) protein is Small ribosomal subunit protein bS18.